A 253-amino-acid chain; its full sequence is Thiamine import ATP-binding protein ThiQ (253 aa).

Residues 8–236 (VRLDKVSFSY…AGPEAFRRYI (229 aa)) form the ABC transporter domain. ATP is bound at residue 38-45 (GPSGSGKS).

It belongs to the ABC transporter superfamily. Thiamine importer (TC 3.A.1.19.1) family. As to quaternary structure, the complex is composed of two ATP-binding proteins (ThiQ), two transmembrane proteins (ThiP) and a solute-binding protein (ThiB).

The protein localises to the cell inner membrane. The catalysed reaction is thiamine(out) + ATP + H2O = thiamine(in) + ADP + phosphate + H(+). Part of the ABC transporter complex ThiBPQ involved in thiamine import. Responsible for energy coupling to the transport system. This Mesorhizobium japonicum (strain LMG 29417 / CECT 9101 / MAFF 303099) (Mesorhizobium loti (strain MAFF 303099)) protein is Thiamine import ATP-binding protein ThiQ.